We begin with the raw amino-acid sequence, 3414 residues long: Hemocyanin 1 (3414 aa).

A signal peptide spans 1 to 16 (MLSVRLLIVVLALANA). A divalent metal cation is bound at residue Glu-17. Residues 17-437 (ENLVRKSVEH…PPVKHHQSAN (421 aa)) form a functional unit a (wall) region. Cu cation is bound at residue His-58. A disulfide bridge connects residues Cys-64 and Cys-73. Positions 74–76 (CIH) form a cross-link, 2'-(S-cysteinyl)-histidine (Cys-His). 5 residues coordinate Cu cation: His-76, His-85, His-195, His-199, and His-226. Cys-185 and Cys-252 are oxidised to a cystine. Residues 287–290 (CELH) constitute a cross-link (2'-(S-cysteinyl)-histidine (Cys-His)). Cys-339 and Cys-351 form a disulfide bridge. Residue Asn-403 is glycosylated (N-linked (GlcNAc...) asparagine). The functional unit b (wall) stretch occupies residues 438 to 851 (LLVRKNINDL…RVKFDKVPRS (414 aa)). His-478 is a Cu cation binding site. Cys-484 and Cys-495 are oxidised to a cystine. Residues 496-498 (CVH) constitute a cross-link (2'-(S-cysteinyl)-histidine (Cys-His)). His-498 and His-507 together coordinate Cu cation. Asn-545 carries N-linked (GlcNAc...) asparagine glycosylation. Cys-608 and Cys-674 are disulfide-bonded. Cu cation is bound by residues His-618, His-622, and His-649. The WD 1 repeat unit spans residues 628–669 (SEHFSMSSLHYTAFDPLFYFHHSNVDRLWAVWQALQMRRHKP). Glu-737 contributes to the a divalent metal cation binding site. The tract at residues 852-1271 (RLIRKNVDRL…EVYQAEVTSA (420 aa)) is functional unit c (wall). His-892 is a Cu cation binding site. Cysteines 898 and 909 form a disulfide. The 2'-(S-cysteinyl)-histidine (Cys-His) cross-link spans 910–912 (CVH). Cu cation-binding residues include His-912, His-921, His-1031, His-1035, and His-1062. 2 disulfides stabilise this stretch: Cys-1021-Cys-1088 and Cys-1178-Cys-1184. Residues 1041 to 1082 (AQPYGMASLRYTAFDPLFYLHHSNTDRIWAIWQALQKYRGKP) form a WD 2 repeat. Residues 1272-1680 (NRIRKNIENL…AHTDDGHTEP (409 aa)) form a functional unit d (wall) region. His-1309 contacts Cu cation. Cys-1315 and Cys-1324 are joined by a disulfide. The segment at residues 1325-1327 (CVH) is a cross-link (2'-(S-cysteinyl)-histidine (Cys-His)). His-1327, His-1336, His-1440, His-1444, and His-1471 together coordinate Cu cation. Intrachain disulfides connect Cys-1430–Cys-1497 and Cys-1585–Cys-1595. Residues 1450 to 1491 (KGKYSMSNLDYAAFDPVFFLHHATTDRIWAIWQDLQRFRKRP) form a WD 3 repeat. The N-linked (GlcNAc...) asparagine glycan is linked to Asn-1648. Positions 1681-2097 (VMIRKDITQL…HDISSHHLSL (417 aa)) are functional unit e (wall). Residue His-1721 participates in Cu cation binding. A disulfide bridge connects residues Cys-1727 and Cys-1738. Residues 1739-1741 (CVH) constitute a cross-link (2'-(S-cysteinyl)-histidine (Cys-His)). Cu cation-binding residues include His-1741, His-1750, His-1863, His-1867, and His-1894. 2 disulfide bridges follow: Cys-1853–Cys-1920 and Cys-2009–Cys-2015. One copy of the WD 4 repeat lies at 1873–1914 (KEPYGIGHLHYASYDPLFYIHHSQTDRIWAIWQSLQRFRGLS). Positions 2098 to 2517 (NKVRHDLSTL…EDHHSSSMAG (420 aa)) are functional unit f (wall). Position 2138 (His-2138) interacts with Cu cation. A disulfide bridge links Cys-2144 with Cys-2154. N-linked (GlcNAc...) asparagine glycosylation occurs at Asn-2145. The segment at residues 2155-2157 (CIH) is a cross-link (2'-(S-cysteinyl)-histidine (Cys-His)). The Cu cation site is built by His-2157, His-2166, His-2276, His-2280, and His-2307. The WD 5 repeat unit spans residues 2163-2199 (PHWHRLYTLQFEQALRRHGSSVAVPYWDWTKPIHNIP). 2 disulfide bridges follow: Cys-2266-Cys-2333 and Cys-2420-Cys-2426. A divalent metal cation is bound at residue Glu-2424. Residues 2518–2921 (HGVRKEINTL…EKHHEDHHED (404 aa)) are functional unit g (internal arc). A Cu cation-binding site is contributed by His-2558. Cys-2564 and Cys-2574 are oxidised to a cystine. The N-linked (GlcNAc...) asparagine glycan is linked to Asn-2571. The 2'-(S-cysteinyl)-histidine (Cys-His) cross-link spans 2575-2577 (CTH). Residues His-2577, His-2586, His-2686, His-2690, and His-2717 each coordinate Cu cation. Disulfide bonds link Cys-2676–Cys-2743 and Cys-2830–Cys-2836. The stretch at 2696 to 2737 (LTPYGMSTLEYTTYDPLFWLHHANTDRIWAIWQALQEYRGLP) is one WD 6 repeat. Residues 2922–3414 (ILVRKNIHSL…LRIHVHVDDE (493 aa)) form a functional unit h (internal slab) region. His-2962 provides a ligand contact to Cu cation. Cys-2968 and Cys-2978 are disulfide-bonded. Positions 2979–2981 (CVH) form a cross-link, 2'-(S-cysteinyl)-histidine (Cys-His). Positions 2981, 2990, 3091, 3095, and 3122 each coordinate Cu cation. A disulfide bridge connects residues Cys-3081 and Cys-3148. Residues 3101–3142 (AEKYSMSTLEYSAFDPYFMIHHASLDKIWIIWQELQKRRVKP) form a WD 7 repeat. Asn-3278 is a glycosylation site (N-linked (GlcNAc...) asparagine). Cys-3367 and Cys-3400 are joined by a disulfide.

The protein belongs to the tyrosinase family. Hemocyanin subfamily. In terms of assembly, homo-didecamer, with two decamers assembled face-to-face at their open ends. This didecamer form a stable 25 nM cylinder wall. In terms of processing, probably N-glycosylated. Asn-1280 and Asn-2484 are buried deeply in the protein which make them inaccessible for sugar attachment. Asn-3278 N-glycan is likely to represent a diantennate carbohydrate tree. The didecamer is almost evenly tagged by a total of 120 sugar trees. In terms of tissue distribution, hemolymph.

The protein localises to the secreted. It localises to the extracellular space. Its function is as follows. Hemocyanins are copper-containing oxygen carriers occurring freely dissolved in the hemolymph of many mollusks and arthropods. The sequence is that of Hemocyanin 1 from Megathura crenulata (Giant keyhole limpet).